An 829-amino-acid polypeptide reads, in one-letter code: MKEPVDCRLSTPAGFSGTVPPPGRTKAARPGTIPVRRSRGSASALPGKIYGWSRRQRDRFAMLLSSFDAALAAYSGVVVSRGTRSLPPSLRLFRAMTRKWLSVTARGNGVEFAIASAKEFSAACRAGWISGTVPDHFFMKWLPEPVRRKSGLWAQLSFIGRSLPEGGDRHEIEALANHKAALSSSFEVPADVLTSLRNYSEDWARRHLAADPDPSLLCEPCTGNSATFERTRREGGFAQSITDLVSSSPTDNLPPLESMPFGPTQGQALPVHVLEVSLSRYHNGSDPKGRVSVVRERGHKVRVVSAMETHELVLGHAARRRLFKGLRRERRLRDTLKGDFEATTKAFVGCAGTVISSDMKSASDLIPLSVASAIVDGLEASGRLLPVEIAGLRACTGPQHLVYPDGSEITTRRGILMGLPTTWAILNLMHLWCWDSADRQYRLEGHPFRATVRSDCRVCGDDLIGVGPDSLLRSYDRNLGLVGMILSPGKHFRSNRRGVFLERLLEFQTRKTVYEHAVIYRKVGHRRVPVDRSHIPVVTRVTVLNTIPLKGLVRASVLGRDDPPVWWAAAVAESSLLSDYPRKKIFAAARTLRPGLSRQFRRLGIPPFLPRELGGAGLVGPSDRVDAPAFHRKAISSLVWGSDATAAYSFIRMWQGFEGHPWKTAASQETDTWFADYKVTRPGKMYPDRYGFLDGESLRTKSTMLNSAVYETFLGPDPDATHYPSLRIVASRLAKVRKDLVNRWPSVKPVGKDLGTILEAFEESKLCTLWVTPYDASGYFDDSLLLMDESVYQRRFRQLVIAGLMREGRMGDLLFPNWLPPSTVVSGFP.

The interval M1 to R39 is disordered.

Forms a ribonucleoprotein complex with the 20S RNA, where a single polymerase molecule binds to a single viral RNA genome. Since the viral RNA is not encapsidated, ribonucleoprotein complex formation appears to be the strategy to survive in the host as persistent virus.

Its subcellular location is the host cytoplasm. The enzyme catalyses RNA(n) + a ribonucleoside 5'-triphosphate = RNA(n+1) + diphosphate. In terms of biological role, RNA-directed RNA polymerase that replicates the viral (+) and (-) genome. This chain is RNA-directed RNA polymerase, found in Saccharomyces cerevisiae (Baker's yeast).